Consider the following 451-residue polypeptide: Cobyrinate a,c-diamide synthase (451 aa).

Residues 246–437 (KIGVAYDEVF…VHTHVAAMPN (192 aa)) form the GATase cobBQ-type domain. Cys328 serves as the catalytic Nucleophile.

It belongs to the CobB/CbiA family. Requires Mg(2+) as cofactor.

The enzyme catalyses cob(II)yrinate + 2 L-glutamine + 2 ATP + 2 H2O = cob(II)yrinate a,c diamide + 2 L-glutamate + 2 ADP + 2 phosphate + 2 H(+). The catalysed reaction is Ni-sirohydrochlorin + 2 L-glutamine + 2 ATP + 2 H2O = Ni-sirohydrochlorin a,c-diamide + 2 L-glutamate + 2 ADP + 2 phosphate + 2 H(+). Its pathway is cofactor biosynthesis; adenosylcobalamin biosynthesis; cob(II)yrinate a,c-diamide from sirohydrochlorin (anaerobic route): step 10/10. Catalyzes the ATP-dependent amidation of the two carboxylate groups at positions a and c of cobyrinate, using either L-glutamine or ammonia as the nitrogen source. Involved in the biosynthesis of the unique nickel-containing tetrapyrrole coenzyme F430, the prosthetic group of methyl-coenzyme M reductase (MCR), which plays a key role in methanogenesis and anaerobic methane oxidation. Catalyzes the ATP-dependent amidation of the two carboxylate groups at positions a and c of Ni-sirohydrochlorin, using L-glutamine or ammonia as the nitrogen source. This chain is Cobyrinate a,c-diamide synthase, found in Methanobrevibacter smithii (strain ATCC 35061 / DSM 861 / OCM 144 / PS).